The primary structure comprises 527 residues: UPF0053 protein YegH (527 aa).

7 helical membrane-spanning segments follow: residues 14–34, 51–71, 81–101, 122–142, 145–165, 185–205, and 207–227; these read ITLI…IAIL, LLLA…LVTL, FTFS…LFKA, GAKF…FSLD, ITAV…VIAI, IVIL…AEGF, and FVIP…IEAL. CBS domains lie at 306 to 366 and 371 to 429; these read MTSR…GEPL and LIRQ…PNEV.

It belongs to the UPF0053 family.

Its subcellular location is the cell membrane. This chain is UPF0053 protein YegH (yegH), found in Shigella flexneri.